A 178-amino-acid polypeptide reads, in one-letter code: ATP synthase subunit b, chloroplastic (178 aa).

A helical transmembrane segment spans residues 26–46; it reads TNLINIIILLIILFYFLKGLL.

Belongs to the ATPase B chain family. In terms of assembly, F-type ATPases have 2 components, F(1) - the catalytic core - and F(0) - the membrane proton channel. F(1) has five subunits: alpha(3), beta(3), gamma(1), delta(1), epsilon(1). F(0) has four main subunits: a(1), b(1), b'(1) and c(10-14). The alpha and beta chains form an alternating ring which encloses part of the gamma chain. F(1) is attached to F(0) by a central stalk formed by the gamma and epsilon chains, while a peripheral stalk is formed by the delta, b and b' chains.

Its subcellular location is the plastid. The protein resides in the chloroplast thylakoid membrane. Its function is as follows. F(1)F(0) ATP synthase produces ATP from ADP in the presence of a proton or sodium gradient. F-type ATPases consist of two structural domains, F(1) containing the extramembraneous catalytic core and F(0) containing the membrane proton channel, linked together by a central stalk and a peripheral stalk. During catalysis, ATP synthesis in the catalytic domain of F(1) is coupled via a rotary mechanism of the central stalk subunits to proton translocation. Functionally, component of the F(0) channel, it forms part of the peripheral stalk, linking F(1) to F(0). In Vaucheria litorea (Yellow-green alga), this protein is ATP synthase subunit b, chloroplastic.